Consider the following 159-residue polypeptide: GDP-mannose mannosyl hydrolase (159 aa).

Substrate is bound by residues 2–3 (FL), Phe8, and Arg36. The Nudix hydrolase domain occupies 13–153 (RSTPLVSLDF…SRAYFLAEKR (141 aa)). The Mg(2+) site is built by Gly49, Glu69, and Gln122. Residues 50 to 71 (GRVQKDETLEAAFERLTMAELG) carry the Nudix box motif.

The protein belongs to the Nudix hydrolase family. As to quaternary structure, homodimer. The cofactor is Mg(2+).

It catalyses the reaction GDP-alpha-D-mannose + H2O = D-mannose + GDP + H(+). Functionally, hydrolyzes GDP-mannose. The polypeptide is GDP-mannose mannosyl hydrolase (Escherichia coli O157:H7).